Consider the following 479-residue polypeptide: Zinc finger and SCAN domain-containing protein 26 (479 aa).

A Glycyl lysine isopeptide (Lys-Gly) (interchain with G-Cter in SUMO2) cross-link involves residue Lys-17. Positions 51 to 133 (CKRFRQLRYE…VFLEDLQLEL (83 aa)) constitute an SCAN box domain. A disordered region spans residues 155-187 (TAPGKATPERQVQPEGDVPQPEREKGEAKRIEN). A compositionally biased stretch (basic and acidic residues) spans 174–187 (QPEREKGEAKRIEN). The C2H2-type 1; degenerate zinc-finger motif lies at 232–254 (CKCSEYGQAFFQHSDLIKHESSH). C2H2-type zinc fingers lie at residues 283–305 (HQCH…QKIH), 311–333 (YQCK…LRIH), 339–361 (YLCI…QRIH), 367–389 (CQCK…QRIH), 395–417 (HQCN…HRIH), 423–445 (FKCT…VRIH), and 451–473 (YKCN…QRYH).

It is found in the nucleus. Its function is as follows. May be involved in transcriptional regulation. In Bos taurus (Bovine), this protein is Zinc finger and SCAN domain-containing protein 26 (ZSCAN26).